The following is a 44-amino-acid chain: MESLLLARLPEAYVVFSPIVDVLPIIPVFFLLLAFVWQAAIGFR.

Residues 1-7 (MESLLLA) constitute a propeptide that is removed on maturation. The helical transmembrane segment at 23–43 (LPIIPVFFLLLAFVWQAAIGF) threads the bilayer.

This sequence belongs to the PsbK family. As to quaternary structure, PSII is composed of 1 copy each of membrane proteins PsbA, PsbB, PsbC, PsbD, PsbE, PsbF, PsbH, PsbI, PsbJ, PsbK, PsbL, PsbM, PsbT, PsbX, PsbY, PsbZ, Psb30/Ycf12, at least 3 peripheral proteins of the oxygen-evolving complex and a large number of cofactors. It forms dimeric complexes.

Its subcellular location is the plastid. The protein localises to the chloroplast thylakoid membrane. Functionally, one of the components of the core complex of photosystem II (PSII). PSII is a light-driven water:plastoquinone oxidoreductase that uses light energy to abstract electrons from H(2)O, generating O(2) and a proton gradient subsequently used for ATP formation. It consists of a core antenna complex that captures photons, and an electron transfer chain that converts photonic excitation into a charge separation. The chain is Photosystem II reaction center protein K from Trieres chinensis (Marine centric diatom).